Consider the following 160-residue polypeptide: Large ribosomal subunit protein eL21 (160 aa).

Composition is skewed to basic and acidic residues over residues 112–123 and 136–145; these read NDQKKKEAKEKG and REAHFVRTNG. The segment at 112–145 is disordered; it reads NDQKKKEAKEKGTWVQLKRQPAPPREAHFVRTNG.

The protein belongs to the eukaryotic ribosomal protein eL21 family. As to quaternary structure, component of the large ribosomal subunit.

The protein localises to the cytoplasm. Its subcellular location is the cytosol. It is found in the endoplasmic reticulum. Functionally, component of the large ribosomal subunit. The ribosome is a large ribonucleoprotein complex responsible for the synthesis of proteins in the cell. This Oryctolagus cuniculus (Rabbit) protein is Large ribosomal subunit protein eL21 (RPL21).